We begin with the raw amino-acid sequence, 291 residues long: Protein US2 (291 aa).

G2 carries the N-acetylglycine; by host; partial modification. A disordered region spans residues 251–270 (PEVPDEQPTSPGRGPQETDP).

Belongs to the herpesviridae HHV-1 US2 protein family. In terms of assembly, interacts with host KRT18.

It is found in the host cytoplasm. The protein localises to the host nucleus. This chain is Protein US2, found in Homo sapiens (Human).